The sequence spans 225 residues: Ribosome maturation factor RimM (225 aa).

Residues 144–225 enclose the PRC barrel domain; sequence ADEFYWVDLI…RIVVDWEADY (82 aa).

It belongs to the RimM family. Binds ribosomal protein uS19.

The protein localises to the cytoplasm. In terms of biological role, an accessory protein needed during the final step in the assembly of 30S ribosomal subunit, possibly for assembly of the head region. Essential for efficient processing of 16S rRNA. May be needed both before and after RbfA during the maturation of 16S rRNA. It has affinity for free ribosomal 30S subunits but not for 70S ribosomes. The chain is Ribosome maturation factor RimM from Burkholderia vietnamiensis (strain G4 / LMG 22486) (Burkholderia cepacia (strain R1808)).